The sequence spans 98 residues: Large ribosomal subunit protein eL21 (98 aa).

Positions M1–G24 are enriched in basic residues. The disordered stretch occupies residues M1–P27.

The protein belongs to the eukaryotic ribosomal protein eL21 family.

The protein is Large ribosomal subunit protein eL21 of Thermococcus gammatolerans (strain DSM 15229 / JCM 11827 / EJ3).